The following is a 104-amino-acid chain: U-scoloptoxin(10)-Cw1a (104 aa).

The N-terminal stretch at 1–23 is a signal peptide; the sequence is MNKTVAVFFAVICVICVIKSCKT.

It belongs to the scoloptoxin-10 family. Contains 3 disulfide bonds. As to expression, expressed by the venom gland.

It localises to the secreted. The chain is U-scoloptoxin(10)-Cw1a from Cormocephalus westwoodi (Westwood's green centipede).